The chain runs to 186 residues: Dynactin subunit 3 (186 aa).

Alanine 2 bears the N-acetylalanine mark. A coiled-coil region spans residues 135 to 157; sequence QQQDQCVEITEESKALLEEYNKT.

Belongs to the dynactin subunit 3 family. As to quaternary structure, subunit of dynactin, a multiprotein complex part of a tripartite complex with dynein and a adapter, such as BICDL1, BICD2 or HOOK3. The dynactin complex is built around ACTR1A/ACTB filament and consists of an actin-related filament composed of a shoulder domain, a pointed end and a barbed end. Its length is defined by its flexible shoulder domain. The soulder is composed of 2 DCTN1 subunits, 4 DCTN2 and 2 DCTN3. The 4 DCNT2 (via N-terminus) bind the ACTR1A filament and act as molecular rulers to determine the length. The pointed end is important for binding dynein-dynactin cargo adapters. Consists of 4 subunits: ACTR10, DCNT4, DCTN5 and DCTN6. The barbed end is composed of a CAPZA1:CAPZB heterodimers, which binds ACTR1A/ACTB filament and dynactin and stabilizes dynactin. Ubiquitously expressed. Highly expressed in muscle and pancreas and detected at lower levels in brain.

Its subcellular location is the cytoplasm. The protein resides in the cytoskeleton. It localises to the microtubule organizing center. It is found in the centrosome. The protein localises to the chromosome. Its subcellular location is the centromere. The protein resides in the kinetochore. It localises to the spindle. It is found in the cleavage furrow. The protein localises to the midbody. Functionally, part of the dynactin complex that activates the molecular motor dynein for ultra-processive transport along microtubules. Together with dynein may be involved in spindle assembly and cytokinesis. The sequence is that of Dynactin subunit 3 from Homo sapiens (Human).